The following is a 185-amino-acid chain: Adenine phosphoribosyltransferase (185 aa).

This sequence belongs to the purine/pyrimidine phosphoribosyltransferase family. In terms of assembly, homodimer.

Its subcellular location is the cytoplasm. The catalysed reaction is AMP + diphosphate = 5-phospho-alpha-D-ribose 1-diphosphate + adenine. It participates in purine metabolism; AMP biosynthesis via salvage pathway; AMP from adenine: step 1/1. Its function is as follows. Catalyzes a salvage reaction resulting in the formation of AMP, that is energically less costly than de novo synthesis. This Aliarcobacter butzleri (strain RM4018) (Arcobacter butzleri) protein is Adenine phosphoribosyltransferase.